Reading from the N-terminus, the 91-residue chain is Potassium channel toxin MeuTXK-beta-1 (91 aa).

The first 19 residues, 1 to 19, serve as a signal peptide directing secretion; sequence MQRNLVVLLFLGMVALSSC. The BetaSPN-type CS-alpha/beta domain maps to 54 to 91; the sequence is QFGCPAYQGYCDDHCQDIEKKEGFCHGFKCKCGIPMGF. 3 disulfides stabilise this stretch: cysteine 57/cysteine 78, cysteine 64/cysteine 83, and cysteine 68/cysteine 85.

As to expression, expressed by the venom gland.

Its subcellular location is the secreted. Has a low affinity binding to potassium channels of rat brain synaptosomes. Displays weak antibacterial activity against Stenotrophomonas sp. Strongly inhibits the development of the Plasmodium berghei ookinetes. Displays slight hemolytic effect on mouse erythrocytes. Induces cytolysis on Xenopus oocytes at high concentrations. Is not toxic towards mice and towards the insect Tenebrio molitor. This chain is Potassium channel toxin MeuTXK-beta-1, found in Mesobuthus eupeus (Lesser Asian scorpion).